A 572-amino-acid chain; its full sequence is Serine/threonine-protein kinase pak-1 (572 aa).

Disordered regions lie at residues 1–71 (MKAF…SRPS) and 156–195 (QPYSTSSLPYHGNKIQDPRKMNPMTTSTSSAGYNSKQGVP). The region spanning 67 to 80 (ISRPSNFEHTIHVG) is the CRIB domain. A linker region spans residues 81–294 (YDPKTGEFTG…IVSIGNPDRK (214 aa)). The span at 178–195 (PMTTSTSSAGYNSKQGVP) shows a compositional bias: polar residues. The Protein kinase domain maps to 295–546 (YRKVDKIGSG…ASQLLTHPFL (252 aa)). Residues 301–309 (IGSGASGSV) and Lys-324 contribute to the ATP site. The active-site Proton acceptor is the Asp-414.

This sequence belongs to the protein kinase superfamily. STE Ser/Thr protein kinase family. STE20 subfamily. In terms of assembly, interacts with cdc-42 (GTP-bound form) and cedd-10 (GTP-bound form). Mg(2+) serves as cofactor. Requires Mn(2+) as cofactor. As to expression, specifically colocalized with cdc-42 and ced-10 at all hypodermal cell boundaries during embryo elongation throughout the second phase of embryogenesis. Expressed mainly in pharyngeal muscles, the CAN neurons, motor neurons in the ventral nerve cord, several cells in the tail region (including the B and Y cells from L1 to adult, the hypodermal blast cell T in the L1 and some of its progeny in later stages), and the distal tip cells.

The protein resides in the cell membrane. The protein localises to the cytoplasm. It is found in the cell projection. Its subcellular location is the axon. It localises to the perikaryon. It carries out the reaction L-seryl-[protein] + ATP = O-phospho-L-seryl-[protein] + ADP + H(+). It catalyses the reaction L-threonyl-[protein] + ATP = O-phospho-L-threonyl-[protein] + ADP + H(+). Functionally, required for hypodermal cell fusion, together with cdc-42 and ced-10, leading to embryonic body elongation, which involves dramatic cytoskeletal reorganization. Plays a redundant role with max-2 in dorsal axonal guidance in ventral cord commissural motoneurons and in P neuroblast migration. Acts probably downstream of Rho GTPases mig-2 and ced-10 to regulate these 2 processes. Involved in orientating axonal growth of HSN neurons. During gonad morphogenesis and probably in association with pix-1 and git-1, involved in the migration of distal tip cell (DTC) and in maintaining their sharp tapering morphology. In addition, plays a redundant role with max-2 in DTC-mediated guidance of gonad elongation. May phosphorylate mlc-4. The polypeptide is Serine/threonine-protein kinase pak-1 (pak-1) (Caenorhabditis elegans).